The sequence spans 56 residues: TSPQREATCTSEVSGCPKIYNPVCGTDGITYSNECVLCSENKKRQTPVLIQKSGPC.

The region spanning 3–56 (PQREATCTSEVSGCPKIYNPVCGTDGITYSNECVLCSENKKRQTPVLIQKSGPC) is the Kazal-like domain. Disulfide bonds link C9–C38, C16–C35, and C24–C56.

The protein resides in the secreted. In terms of biological role, serine protease inhibitor which exhibits anti-trypsin activity. In the pancreas, protects against trypsin-catalyzed premature activation of zymogens. In the male reproductive tract, binds to sperm heads where it modulates sperm capacitance by inhibiting calcium uptake and nitrogen oxide (NO) production. In Sus scrofa (Pig), this protein is Serine protease inhibitor Kazal-type 1 (SPINK1).